Reading from the N-terminus, the 495-residue chain is Germacrene A acid 8-beta-hydroxylase (495 aa).

The chain crosses the membrane as a helical; Signal-anchor for type II membrane protein span at residues 3–23 (PFTTFSLVASSLILLICWALV). N-linked (GlcNAc...) asparagine glycosylation occurs at Asn103. Cys433 provides a ligand contact to heme.

Belongs to the cytochrome P450 family. Heme is required as a cofactor. As to expression, mostly expressed in leaves and flowers, and, to a lower extent, in roots and stems.

Its subcellular location is the membrane. It carries out the reaction germacra-1(10),4,11(13)-trien-12-oate + reduced [NADPH--hemoprotein reductase] + O2 = 8beta-hydroxygermacra-1(10),4,11(13)-trien-12-oate + oxidized [NADPH--hemoprotein reductase] + H2O + H(+). The catalysed reaction is germacra-1(10),4,11(13)-trien-12-oate + reduced [NADPH--hemoprotein reductase] + O2 = 8-epi-inunolide + oxidized [NADPH--hemoprotein reductase] + 2 H2O. The enzyme catalyses germacra-1(10),4,11(13)-trien-12-oate + reduced [NADPH--hemoprotein reductase] + O2 = 8alpha-hydroxygermacra-1(10),4,11(13)-trien-12-oate + oxidized [NADPH--hemoprotein reductase] + H2O + H(+). It participates in secondary metabolite biosynthesis; terpenoid biosynthesis. Functionally, involved in the biosynthesis of germacrene-derived sesquiterpene lactones. Hydroxylates germacrene A acid to 8-beta-hydroxy-germacrene A and 8-alpha-hydroxy-germacrene A acids. Unlike 8-alpha-hydroxy-germacrene A acid with is spontaneously converted into inunolide (12, 8-alpha), 8-beta-hydroxy-germacrene A cannot undergo spontaneous lactonization. The chain is Germacrene A acid 8-beta-hydroxylase from Inula hupehensis (Inula helianthus-aquatilis subsp. hupehensis).